The chain runs to 419 residues: Mitochondrial chaperone BCS1 (419 aa).

Residues 1-15 (MPLSDFVLALKDNPY) are Mitochondrial intermembrane-facing. A helical transmembrane segment spans residues 16-32 (FGAGFGLVGVGTALALA). At 33–419 (RKGAQLGLVA…AIQNAESLRR (387 aa)) the chain is on the mitochondrial matrix side. Position 181 is a phosphotyrosine (Tyr-181). 230 to 237 (GPPGCGKS) serves as a coordination point for ATP.

The protein belongs to the AAA ATPase family. BCS1 subfamily. In terms of assembly, interacts with LETM1.

The protein localises to the mitochondrion inner membrane. The enzyme catalyses ATP + H2O = ADP + phosphate + H(+). Chaperone necessary for the incorporation of Rieske iron-sulfur protein UQCRFS1 into the mitochondrial respiratory chain complex III. Plays an important role in the maintenance of mitochondrial tubular networks, respiratory chain assembly and formation of the LETM1 complex. The protein is Mitochondrial chaperone BCS1 (BCS1L) of Bos taurus (Bovine).